The chain runs to 91 residues: Bacterial microcompartment shell vertex protein PduN (91 aa).

A BMV domain is found at 1–87 (MHLARVTGAV…IDLAVVGIVD (87 aa)).

This sequence belongs to the CcmL/EutN family. As to quaternary structure, homopentamer. Interacts with shell protein PduA.

It localises to the bacterial microcompartment. It functions in the pathway polyol metabolism; 1,2-propanediol degradation. In terms of biological role, probably forms vertices in the shell of the bacterial microcompartment (BMC) dedicated to 1,2-propanediol (1,2-PD) degradation. Required for structural integrity of BMCs and to mitigate propionaldehyde toxicity. Its function is as follows. The 1,2-PD-specific bacterial microcompartment (BMC) concentrates low levels of 1,2-PD catabolic enzymes, concentrates volatile reaction intermediates thus enhancing pathway flux and keeps the level of toxic, mutagenic propionaldehyde low. The polypeptide is Bacterial microcompartment shell vertex protein PduN (Salmonella typhimurium (strain LT2 / SGSC1412 / ATCC 700720)).